A 138-amino-acid polypeptide reads, in one-letter code: Basic phospholipase A2 chain HDP-2P (138 aa).

The signal sequence occupies residues 1–16 (MRILWIVAVCLIGVEG). 7 disulfides stabilise this stretch: Cys42–Cys131, Cys44–Cys60, Cys59–Cys111, Cys65–Cys138, Cys66–Cys104, Cys73–Cys97, and Cys91–Cys102. Residues Tyr43, Gly45, and Gly47 each contribute to the Ca(2+) site. The active site involves His63. Residue Asp64 participates in Ca(2+) binding. Asp105 is a catalytic residue.

As to quaternary structure, heterodimer of an acidic and a basic chain; non-covalently linked. The toxic basic protein has phospholipase A2 activity (chain HDP-2P) and the non-toxic acidic protein functions as its inhibitor (chain HPD-1I (AC A4VBF0)). Ca(2+) serves as cofactor. In terms of tissue distribution, expressed by the venom gland.

The protein resides in the secreted. It catalyses the reaction a 1,2-diacyl-sn-glycero-3-phosphocholine + H2O = a 1-acyl-sn-glycero-3-phosphocholine + a fatty acid + H(+). Enzymatic activity and neurotoxicity are inhibited by Triton X-100. Triton X-100 has been determined to be located in the center of the hydrophobic channel of the enzyme. Functionally, monomer: snake venom phospholipase A2 (PLA2) that affects neuromuscular transmission presynaptically. It has catalytic activity, anticoagulant activity and weakly inhibits ADP-induced platelet aggregation. PLA2 catalyzes the calcium-dependent hydrolysis of the 2-acyl groups in 3-sn-phosphoglycerides. Its function is as follows. Heterodimer: shows the same activities as the monomer, but with a lower potency. This Vipera nikolskii (Nikolsky's adder) protein is Basic phospholipase A2 chain HDP-2P.